Here is a 560-residue protein sequence, read N- to C-terminus: Dihydroxy-acid dehydratase (560 aa).

Cysteine 52 contributes to the [2Fe-2S] cluster binding site. Aspartate 84 serves as a coordination point for Mg(2+). Residue cysteine 125 coordinates [2Fe-2S] cluster. Mg(2+)-binding residues include aspartate 126 and lysine 127. Lysine 127 bears the N6-carboxylysine mark. Cysteine 197 serves as a coordination point for [2Fe-2S] cluster. Residue glutamate 448 coordinates Mg(2+). Serine 474 serves as the catalytic Proton acceptor.

This sequence belongs to the IlvD/Edd family. As to quaternary structure, homodimer. It depends on [2Fe-2S] cluster as a cofactor. Mg(2+) serves as cofactor.

It catalyses the reaction (2R)-2,3-dihydroxy-3-methylbutanoate = 3-methyl-2-oxobutanoate + H2O. The enzyme catalyses (2R,3R)-2,3-dihydroxy-3-methylpentanoate = (S)-3-methyl-2-oxopentanoate + H2O. It functions in the pathway amino-acid biosynthesis; L-isoleucine biosynthesis; L-isoleucine from 2-oxobutanoate: step 3/4. It participates in amino-acid biosynthesis; L-valine biosynthesis; L-valine from pyruvate: step 3/4. Its function is as follows. Functions in the biosynthesis of branched-chain amino acids. Catalyzes the dehydration of (2R,3R)-2,3-dihydroxy-3-methylpentanoate (2,3-dihydroxy-3-methylvalerate) into 2-oxo-3-methylpentanoate (2-oxo-3-methylvalerate) and of (2R)-2,3-dihydroxy-3-methylbutanoate (2,3-dihydroxyisovalerate) into 2-oxo-3-methylbutanoate (2-oxoisovalerate), the penultimate precursor to L-isoleucine and L-valine, respectively. This Francisella tularensis subsp. tularensis (strain WY96-3418) protein is Dihydroxy-acid dehydratase.